A 224-amino-acid polypeptide reads, in one-letter code: MPLTPEPPSGRVEGPPAWEAAPWPSLPCGPCIPIMLVLATLAALFILTTAVLAERLFRRALRPDPSHRAPTLVWRPGGELWIEPMGTARERSEDWYGSAVPLLTDRAPEPPTQVGTLEARATAPPAPSAPNSAPSNLGPQTVLEVPARSTFWGPQPWEGRPPATGLVSWAEPEQRPEASVQFGSPQARRQRPGSPDPEWGLQPRVTLEQISAFWKREGRTSVGF.

An O-linked (GalNAc...) threonine glycan is attached at threonine 4. The chain crosses the membrane as a helical span at residues 32 to 52 (IPIMLVLATLAALFILTTAVL). Disordered stretches follow at residues 104–138 (TDRA…SNLG) and 152–203 (WGPQ…GLQP). 2 positions are modified to phosphothreonine: threonine 112 and threonine 116. Serine 194 is modified (phosphoserine).

Post-translationally, O-glycosylated with core 1 or possibly core 8 glycans.

It is found in the membrane. This is Transmembrane protein C16orf54 (C16orf54) from Homo sapiens (Human).